Here is a 179-residue protein sequence, read N- to C-terminus: Pyridoxal 5'-phosphate synthase subunit PdxT (179 aa).

48 to 50 (GES) serves as a coordination point for L-glutamine. Catalysis depends on cysteine 79, which acts as the Nucleophile. L-glutamine is bound by residues arginine 101 and 127–128 (IR). Catalysis depends on charge relay system residues histidine 163 and glutamate 165.

It belongs to the glutaminase PdxT/SNO family. In terms of assembly, in the presence of PdxS, forms a dodecamer of heterodimers. Only shows activity in the heterodimer.

The enzyme catalyses aldehydo-D-ribose 5-phosphate + D-glyceraldehyde 3-phosphate + L-glutamine = pyridoxal 5'-phosphate + L-glutamate + phosphate + 3 H2O + H(+). The catalysed reaction is L-glutamine + H2O = L-glutamate + NH4(+). It participates in cofactor biosynthesis; pyridoxal 5'-phosphate biosynthesis. Functionally, catalyzes the hydrolysis of glutamine to glutamate and ammonia as part of the biosynthesis of pyridoxal 5'-phosphate. The resulting ammonia molecule is channeled to the active site of PdxS. In Francisella tularensis subsp. tularensis (strain FSC 198), this protein is Pyridoxal 5'-phosphate synthase subunit PdxT.